The chain runs to 139 residues: uncharacterized protein (139 aa).

A run of 2 helical transmembrane segments spans residues 35-55 (LVFLFVVFFSDCFFSITSFLI) and 57-77 (FGILSSFLIFSLFCLGFLTVI).

The protein resides in the membrane. This is an uncharacterized protein from Saccharomyces cerevisiae (strain ATCC 204508 / S288c) (Baker's yeast).